The chain runs to 416 residues: 3-oxoacyl-[acyl-carrier-protein] synthase 1 (416 aa).

The region spanning 11-415 (FPSVVVTAVT…GHNVALAFGR (405 aa)) is the Ketosynthase family 3 (KS3) domain. Catalysis depends on for beta-ketoacyl synthase activity residues Cys-171, His-311, and His-345. His-311 and His-345 together coordinate substrate.

It belongs to the thiolase-like superfamily. Beta-ketoacyl-ACP synthases family.

The protein resides in the cytoplasm. The catalysed reaction is an ultra-long-chain mono-unsaturated fatty acyl-[ACP] + malonyl-[ACP] + H(+) = a 3-oxo-ultra-long-chain mono-unsaturated fatty acyl-[ACP] + holo-[ACP] + CO2. The protein operates within lipid metabolism; mycolic acid biosynthesis. Part of the mycobacterial fatty acid elongation system FAS-II, which is involved in mycolic acid biosynthesis. Catalyzes the elongation of long chain acyl-ACP substrates by the addition of two carbons from malonyl-ACP to an acyl acceptor. Involved in the initial extension of the mycolate chain and forms monounsaturated fatty acids that averaged 40 carbons in length. The protein is 3-oxoacyl-[acyl-carrier-protein] synthase 1 (kasA) of Mycobacterium tuberculosis (strain ATCC 35801 / TMC 107 / Erdman).